The following is a 137-amino-acid chain: Putative nucleoside diphosphate kinase (137 aa).

ATP is bound by residues Phe-45, Arg-73, Thr-79, Arg-90, and Asn-100. His-103 (pros-phosphohistidine intermediate) is an active-site residue.

The protein belongs to the NDK family. Requires Mg(2+) as cofactor.

The enzyme catalyses a 2'-deoxyribonucleoside 5'-diphosphate + ATP = a 2'-deoxyribonucleoside 5'-triphosphate + ADP. It catalyses the reaction a ribonucleoside 5'-diphosphate + ATP = a ribonucleoside 5'-triphosphate + ADP. Functionally, major role in the synthesis of nucleoside triphosphates other than ATP. The ATP gamma phosphate is transferred to the NDP beta phosphate via a ping-pong mechanism, using a phosphorylated active-site intermediate. The protein is Putative nucleoside diphosphate kinase (NME2P1) of Homo sapiens (Human).